We begin with the raw amino-acid sequence, 177 residues long: Large ribosomal subunit protein uL6 (177 aa).

It belongs to the universal ribosomal protein uL6 family. As to quaternary structure, part of the 50S ribosomal subunit.

Functionally, this protein binds to the 23S rRNA, and is important in its secondary structure. It is located near the subunit interface in the base of the L7/L12 stalk, and near the tRNA binding site of the peptidyltransferase center. The chain is Large ribosomal subunit protein uL6 from Pseudomonas entomophila (strain L48).